The primary structure comprises 192 residues: Sarcoplasmic calcium-binding protein, alpha-B and -A chains (192 aa).

The residue at position 1 (Ala1) is an N-acetylalanine. EF-hand domains follow at residues 4–39 (WDNRVKYVVRYMYDIDDDGFLDKNDFECLAVRNTLI), 56–91 (IMRNLWNEIAELADFNKDGEVTVDEFKMAVQKHCQG), 100–135 (AFKVFIANQFKAIDVNGDGKVGLDEYRLDCITRSAF), and 136–171 (AEVKEIDDAYDKLTTEDDRKAGGLTLERYQDLYAQF). Ca(2+) contacts are provided by Asp17, Asp19, Asp21, Asp28, Asp69, Asn71, Asp73, Glu75, Glu80, Asp113, Asn115, Asp117, Lys119, and Glu124.

As to quaternary structure, SCPs from crayfish, lobster, and shrimp are polymorphic dimers; three isotypes (alpha-alpha, alpha-beta, and beta-beta) have been identified.

In terms of biological role, like parvalbumins, SCPs seem to be more abundant in fast contracting muscles, but no functional relationship can be established from this distribution. The polypeptide is Sarcoplasmic calcium-binding protein, alpha-B and -A chains (Penaeus sp. (Penoeid shrimp)).